The chain runs to 282 residues: Bifunctional protein FolD (282 aa).

163–165 (GRS) is a binding site for NADP(+).

The protein belongs to the tetrahydrofolate dehydrogenase/cyclohydrolase family. In terms of assembly, homodimer.

It catalyses the reaction (6R)-5,10-methylene-5,6,7,8-tetrahydrofolate + NADP(+) = (6R)-5,10-methenyltetrahydrofolate + NADPH. The catalysed reaction is (6R)-5,10-methenyltetrahydrofolate + H2O = (6R)-10-formyltetrahydrofolate + H(+). Its pathway is one-carbon metabolism; tetrahydrofolate interconversion. Its function is as follows. Catalyzes the oxidation of 5,10-methylenetetrahydrofolate to 5,10-methenyltetrahydrofolate and then the hydrolysis of 5,10-methenyltetrahydrofolate to 10-formyltetrahydrofolate. In Leuconostoc citreum (strain KM20), this protein is Bifunctional protein FolD.